A 103-amino-acid polypeptide reads, in one-letter code: MYAVFQSGGKQHRVSEGQTVRLEKLDIATGETIEFAEVLMVANGEEVKIGVPFVDGGVIKAEVVAHGRGEKVKIVKFRRRKHYRKQQGHRQWFTDVKITGISA.

This sequence belongs to the bacterial ribosomal protein bL21 family. As to quaternary structure, part of the 50S ribosomal subunit. Contacts protein L20.

This protein binds to 23S rRNA in the presence of protein L20. The protein is Large ribosomal subunit protein bL21 of Salmonella schwarzengrund (strain CVM19633).